Reading from the N-terminus, the 453-residue chain is Serine/threonine-protein kinase VRK3 (453 aa).

Residues 30–123 (EDGGTQSAVT…QSPQTLKRTR (94 aa)) are disordered. Positions 33–46 (GTQSAVTPHVSSVP) are enriched in polar residues. A Nuclear localization signal motif is present at residues 49–64 (RRDLNSSFETSPKKVK). A phosphoserine mark is found at S54, S55, S59, S82, S83, and S108. Polar residues predominate over residues 81-101 (DSSGSDNTLTSPDRATGTRSR). Polar residues predominate over residues 109-123 (PLSNRQSPQTLKRTR). Positions 125–436 (TTSLQALATG…TLRNSLEALL (312 aa)) constitute a Protein kinase domain.

The protein belongs to the protein kinase superfamily. CK1 Ser/Thr protein kinase family. VRK subfamily. In terms of assembly, interacts with DUSP3. Interacts with RAN. Interacts with HSP70/HSPA1A. In terms of processing, phosphorylated at Ser-108 by CDK5; leading to protection of the cell against H2O2-induced apoptosis. Ubiquitinated by RNF144A. In terms of tissue distribution, expressed in liver, kidney, muscle, thymus, and bone marrow. Weakly expressed in spleen.

Its subcellular location is the nucleus. The protein resides in the cytoplasm. It catalyses the reaction L-seryl-[protein] + ATP = O-phospho-L-seryl-[protein] + ADP + H(+). In terms of biological role, plays a role in the regulation of the cell cycle by phosphorylating the nuclear envelope protein barrier-to-autointegration factor/BAF that is required for disassembly and reassembly, respectively, of the nuclear envelope during mitosis. Under normal physiological conditions, negatively regulates ERK activity along with VHR phosphatase in the nucleus, causing timely and transient action of ERK. Stress conditions activate CDK5 which phosphorylates VRK3 to increase VHR phosphatase activity and suppress prolonged ERK activation that causes cell death. For example, upon glutamate induction, promotes nuclear localization of HSP70/HSPA1A to inhibit ERK activation via VHR phosphatase. In Mus musculus (Mouse), this protein is Serine/threonine-protein kinase VRK3 (Vrk3).